The chain runs to 447 residues: Phosphoglucosamine mutase (447 aa).

The active-site Phosphoserine intermediate is the serine 102. Mg(2+) is bound by residues serine 102, aspartate 241, aspartate 243, and aspartate 245. Serine 102 carries the phosphoserine modification.

This sequence belongs to the phosphohexose mutase family. Requires Mg(2+) as cofactor. In terms of processing, activated by phosphorylation.

It catalyses the reaction alpha-D-glucosamine 1-phosphate = D-glucosamine 6-phosphate. Catalyzes the conversion of glucosamine-6-phosphate to glucosamine-1-phosphate. The protein is Phosphoglucosamine mutase of Hamiltonella defensa subsp. Acyrthosiphon pisum (strain 5AT).